The primary structure comprises 388 residues: MIKNPKVLILTAHYGNGHVQVAKTLEQTFRQKGIKDVIVCDLFGESHPVITDITKYLYLKSYTIGKELYRLFYYGVEKIYDKKIASWYANFGRKRLKLLLQAEKPDIVINTFPIIAVPELKKQTGISIPVYNVLTDFCVHKIWIHREVDRYFVATDHVKKVMVDIGVPAEQIVETGIPIRSSFELKINPDIIYNKYQLCKNKKILLIVAGAHGVLGSVKELCQSFMSVPDLQVVVVCGKNEALKQDLVGVQETNPDALKVFGYVENIDELFRVTSCMITKPGGITLSEAAALQVPVILYKPVPGQENENAMYFERKGAAVVIRDDSEVFAKTEALLQDDMKLLQMKEAMKSIYRPEPADHIVDTILEENHVEPNHIPIKSPALAQSFT.

This sequence belongs to the glycosyltransferase 28 family. UgtP subfamily.

It is found in the cell membrane. The enzyme catalyses a 1,2-diacyl-3-O-(beta-D-glucopyranosyl)-sn-glycerol + UDP-alpha-D-glucose = a 1,2-diacyl-3-O-(beta-D-Glc-(1-&gt;6)-beta-D-Glc)-sn-glycerol + UDP + H(+). It carries out the reaction a 1,2-diacyl-3-O-(beta-D-Glc-(1-&gt;6)-beta-D-Glc)-sn-glycerol + UDP-alpha-D-glucose = a 1,2-diacyl-3-O-(beta-D-Glc-(1-&gt;6)-beta-D-Glc-(1-&gt;6)-beta-D-Glc)-sn-glycerol + UDP + H(+). It catalyses the reaction a 1,2-diacyl-sn-glycerol + UDP-alpha-D-glucose = a 1,2-diacyl-3-O-(beta-D-glucopyranosyl)-sn-glycerol + UDP + H(+). It functions in the pathway glycolipid metabolism; diglucosyl-diacylglycerol biosynthesis. In terms of biological role, processive glucosyltransferase involved in the biosynthesis of both the bilayer- and non-bilayer-forming membrane glucolipids. Is able to successively transfer up to three glucosyl residues to diacylglycerol (DAG), thereby catalyzing the formation of beta-monoglucosyl-DAG (3-O-(beta-D-glucopyranosyl)-1,2-diacyl-sn-glycerol), beta-diglucosyl-DAG (3-O-(beta-D-glucopyranosyl-beta-(1-&gt;6)-D-glucopyranosyl)-1,2-diacyl-sn-glycerol) and beta-triglucosyl-DAG (3-O-(beta-D-glucopyranosyl-beta-(1-&gt;6)-D-glucopyranosyl-beta-(1-&gt;6)-D-glucopyranosyl)-1,2-diacyl-sn-glycerol). Beta-diglucosyl-DAG is the predominant glycolipid found in Bacillales and is also used as a membrane anchor for lipoteichoic acid (LTA). The polypeptide is Processive diacylglycerol beta-glucosyltransferase (Bacillus thuringiensis (strain Al Hakam)).